The following is a 178-amino-acid chain: High mobility group B protein 1 (178 aa).

Basic and acidic residues-rich tracts occupy residues 1–52 and 101–118; these read MKTA…DPNK and APYE…EKQM. Disordered regions lie at residues 1–59 and 75–178; these read MKTA…APSA and NPNV…EEED. Residues 53–122 constitute a DNA-binding region (HMG box); that stretch reads PKRAPSAFFV…EYEKQMDAYN (70 aa). Residues S137 and S146 each carry the phosphoserine modification. Residues 140–178 show a composition bias toward acidic residues; it reads NDEDEASGEEELLEKEAAGDDEEEEEEEDDDDDDDEEED.

The protein belongs to the HMGB family. In terms of tissue distribution, expressed in cotyledons, roots, stems, leaves and flowers (excluding pedicels).

It is found in the nucleus. In terms of biological role, binds preferentially double-stranded DNA. Modulates general plant growth and stress tolerance. Confers sensitivity to salt and genotoxic (methyl methanesulfonate, MMS) stresses. In Arabidopsis thaliana (Mouse-ear cress), this protein is High mobility group B protein 1 (HMGB1).